The following is a 201-amino-acid chain: Glycerol-3-phosphate acyltransferase (201 aa).

Transmembrane regions (helical) follow at residues 5-25 (LLGA…FGVV), 55-75 (KMGV…ILLA), 88-108 (WSTA…WLGF), 118-138 (LGIF…GYAV), and 164-184 (TYGV…LIFL).

It belongs to the PlsY family. As to quaternary structure, probably interacts with PlsX.

The protein resides in the cell inner membrane. It carries out the reaction an acyl phosphate + sn-glycerol 3-phosphate = a 1-acyl-sn-glycero-3-phosphate + phosphate. Its pathway is lipid metabolism; phospholipid metabolism. Catalyzes the transfer of an acyl group from acyl-phosphate (acyl-PO(4)) to glycerol-3-phosphate (G3P) to form lysophosphatidic acid (LPA). This enzyme utilizes acyl-phosphate as fatty acyl donor, but not acyl-CoA or acyl-ACP. This chain is Glycerol-3-phosphate acyltransferase, found in Anaeromyxobacter dehalogenans (strain 2CP-C).